A 258-amino-acid polypeptide reads, in one-letter code: Phosphatidylglycerol--prolipoprotein diacylglyceryl transferase (258 aa).

Transmembrane regions (helical) follow at residues 9–29, 53–73, 90–110, 117–139, 169–189, 198–218, and 230–250; these read ILIQ…ATGF, LLTY…TLIY, EGGL…WLFV, KFLW…IRLG, PVQL…LMLF, GFLF…IEYF, and LISV…VLML. R137 contacts a 1,2-diacyl-sn-glycero-3-phospho-(1'-sn-glycerol).

The protein belongs to the Lgt family.

The protein localises to the cell inner membrane. It catalyses the reaction L-cysteinyl-[prolipoprotein] + a 1,2-diacyl-sn-glycero-3-phospho-(1'-sn-glycerol) = an S-1,2-diacyl-sn-glyceryl-L-cysteinyl-[prolipoprotein] + sn-glycerol 1-phosphate + H(+). It participates in protein modification; lipoprotein biosynthesis (diacylglyceryl transfer). Its function is as follows. Catalyzes the transfer of the diacylglyceryl group from phosphatidylglycerol to the sulfhydryl group of the N-terminal cysteine of a prolipoprotein, the first step in the formation of mature lipoproteins. The protein is Phosphatidylglycerol--prolipoprotein diacylglyceryl transferase of Tolumonas auensis (strain DSM 9187 / NBRC 110442 / TA 4).